We begin with the raw amino-acid sequence, 464 residues long: Neuronal acetylcholine receptor subunit beta-3 (464 aa).

Positions 1–30 are cleaved as a signal peptide; the sequence is MTGFLRVFLVLSATLSGSWVTLTATAGLSS. Residues 31–238 lie on the Extracellular side of the membrane; it reads VAEHEDALLR…VTYSFVLRRL (208 aa). 2 N-linked (GlcNAc...) asparagine glycosylation sites follow: Asn55 and Asn172. An intrachain disulfide couples Cys159 to Cys173. The next 3 helical transmembrane spans lie at 239–263, 271–288, and 305–326; these read PLFY…VFYL, LSLS…LLVI, and YLLF…VINV. Residues 327-434 lie on the Cytoplasmic side of the membrane; that stretch reads HHRSSSTYHP…WKFVAQVLDR (108 aa). The chain crosses the membrane as a helical span at residues 435-453; that stretch reads IFLWLFLIASVLGSILIFI.

The protein belongs to the ligand-gated ion channel (TC 1.A.9) family. Acetylcholine receptor (TC 1.A.9.1) subfamily. Beta-3/CHRNB3 sub-subfamily. Neuronal AChR seems to be composed of two different type of subunits: alpha and beta. CHRNB3/beta-3 subunit is only able to form functional nAChRs when co-assembled with another beta subunit. Participates in pentameric assemblies along with CHRNA4/alpha-4 and CHRNB2/beta-2 subunits and with CHRNA6/alpha-6 as well, forming stoichiometries such as (CHRNA3:CHRNB4)2:CHRNB3, (CHRNA4:CHRNB2)2:CHRNB3 or (CHRNA6:CHRNB2)2:CHRNB3.

The protein localises to the synaptic cell membrane. It is found in the cell membrane. The enzyme catalyses Ca(2+)(in) = Ca(2+)(out). It catalyses the reaction K(+)(in) = K(+)(out). The catalysed reaction is Na(+)(in) = Na(+)(out). With respect to regulation, activated by a myriad of ligands such as acetylcholine, cytisine, nicotine, choline and epibatidine. Its function is as follows. Component of neuronal acetylcholine receptors (nAChRs) that function as pentameric, ligand-gated cation channels with high calcium permeability among other activities. nAChRs are excitatory neurotrasnmitter receptors formed by a collection of nAChR subunits known to mediate synaptic transmission in the nervous system and the neuromuscular junction. Each nAchR subunit confers differential attributes to channel properties, including activation, deactivation and desensitization kinetics, pH sensitivity, cation permeability, and binding to allosteric modulators. Has an accessory rather than functional role and is only able to form functional nAChRs when co-assembled with another beta subunit. Participates in pentameric assemblies along with CHRNA3, CHRNA4, CHRNA6, CHRNB2 and CHRNB4. Modulates receptor assembly and increases receptor sensitivity to nicotine when associated with CHRNB2, CHRNA4 and/or CHRNA6 as well as CHRNA3 and CHRNB4. Seems to play a role in nicotine addiction. The sequence is that of Neuronal acetylcholine receptor subunit beta-3 (Chrnb3) from Rattus norvegicus (Rat).